The following is a 406-amino-acid chain: MDLLLTNARLVTLQSGEMGYQPSTPMSIGIKAGKIHYLGIDTALAATKQIDLKGKLVTPGLIDCHTHLVYAGNRSNEFEMRLQGVPYQEIARQGGGILSTVYGTRQASEAQLLEQTLPRLDGLLASGVTSVEIKSGYGLTLVDEIKMLRVAKSLSQHRLVKVTPTLLAAHALPPEFTGRANDYIEFICQEIIPVVAEEQLATSVDVFCESIGFDLAQTERVYACAVDHGLRVKGHTEQLSNLGGTALTARYQGLSADHIEFLDRAGVEALARSSTVATLLPGAFYFLRETQLPPIELLRQFGVPMAIASDVNPGTSPFCDLTLMMNMACTLFRLTPEEALRGVTQHAAQALGYAESRGQIKTGYDADLAIWQIEHPADLSYQVGTQRLFARVVDGQFEQHKECCDE.

Fe(3+) contacts are provided by histidine 65 and histidine 67. Positions 65 and 67 each coordinate Zn(2+). Residues arginine 74, tyrosine 137, and histidine 170 each coordinate 4-imidazolone-5-propanoate. Tyrosine 137 contributes to the N-formimidoyl-L-glutamate binding site. Histidine 235 lines the Fe(3+) pocket. A Zn(2+)-binding site is contributed by histidine 235. 4-imidazolone-5-propanoate is bound at residue glutamine 238. Aspartate 310 is a binding site for Fe(3+). Residue aspartate 310 participates in Zn(2+) binding. Asparagine 312 and glycine 314 together coordinate N-formimidoyl-L-glutamate. Threonine 315 contacts 4-imidazolone-5-propanoate.

It belongs to the metallo-dependent hydrolases superfamily. HutI family. It depends on Zn(2+) as a cofactor. Fe(3+) is required as a cofactor.

The protein resides in the cytoplasm. It carries out the reaction 4-imidazolone-5-propanoate + H2O = N-formimidoyl-L-glutamate. Its pathway is amino-acid degradation; L-histidine degradation into L-glutamate; N-formimidoyl-L-glutamate from L-histidine: step 3/3. Its function is as follows. Catalyzes the hydrolytic cleavage of the carbon-nitrogen bond in imidazolone-5-propanoate to yield N-formimidoyl-L-glutamate. It is the third step in the universal histidine degradation pathway. The chain is Imidazolonepropionase from Vibrio vulnificus (strain YJ016).